We begin with the raw amino-acid sequence, 380 residues long: MGIHGLTKLIADQAPGAIKEQDIKNYFGRKIAIDASMCLYQFLIAVRQDGNVLQNEDGETTSHLMGMFYRTIRMLEHGIKPVYVFDGKPPQLKSAELEKRGEKRAEAEKMLAQAQELGEQENIDKFSKRLVKVTKQHNDECKKLLTLMGVPYIEAPCEAEATCAALVKAGKVFATATEDMDGLTFGTNVLLRHLTASEAKKLPIQELHYSRILQDIGLTNEQFIDLCIPLGCDYCGTIKGIGPKRAIDLIKQHGSIEEILENIDSSKHPAPEDWLYKEARGLFLKAEVVDCSTVDLKWSEPDEEGLIQFMCNEKQFSEDRMRNGCKKILKSRQGSTQGRLDSFFSITGSLSSKRKEPELKGSAKKKQKTGATPGKFKKGK.

Residues 1–104 (MGIHGLTKLI…AELEKRGEKR (104 aa)) form an N-domain region. Aspartate 34 serves as a coordination point for Mg(2+). The DNA site is built by arginine 47 and arginine 70. Aspartate 86, glutamate 158, glutamate 160, aspartate 179, and aspartate 181 together coordinate Mg(2+). An I-domain region spans residues 122–253 (NIDKFSKRLV…KRAIDLIKQH (132 aa)). DNA is bound at residue glutamate 158. Glycine 231 and aspartate 233 together coordinate DNA. Aspartate 233 serves as a coordination point for Mg(2+). The tract at residues 336–344 (TQGRLDSFF) is interaction with PCNA. Residues 351–380 (SSKRKEPELKGSAKKKQKTGATPGKFKKGK) form a disordered region.

Belongs to the XPG/RAD2 endonuclease family. FEN1 subfamily. Interacts with PCNA. Three molecules of fen1 bind to one PCNA trimer with each molecule binding to one PCNA monomer. PCNA stimulates the nuclease activity without altering cleavage specificity. Requires Mg(2+) as cofactor. Post-translationally, phosphorylated. Phosphorylation upon DNA damage induces relocalization to the nuclear plasma.

The protein resides in the nucleus. It is found in the nucleolus. The protein localises to the nucleoplasm. Its subcellular location is the mitochondrion. Functionally, structure-specific nuclease with 5'-flap endonuclease and 5'-3' exonuclease activities involved in DNA replication and repair. During DNA replication, cleaves the 5'-overhanging flap structure that is generated by displacement synthesis when DNA polymerase encounters the 5'-end of a downstream Okazaki fragment. It enters the flap from the 5'-end and then tracks to cleave the flap base, leaving a nick for ligation. Also involved in the long patch base excision repair (LP-BER) pathway, by cleaving within the apurinic/apyrimidinic (AP) site-terminated flap. Acts as a genome stabilization factor that prevents flaps from equilibrating into structures that lead to duplications and deletions. Also possesses 5'-3' exonuclease activity on nicked or gapped double-stranded DNA, and exhibits RNase H activity. Also involved in replication and repair of rDNA and in repairing mitochondrial DNA. This Anoplopoma fimbria (Sablefish) protein is Flap endonuclease 1 (fen1).